Reading from the N-terminus, the 238-residue chain is Ribosomal RNA small subunit methyltransferase G (238 aa).

S-adenosyl-L-methionine-binding positions include glycine 77, phenylalanine 82, 128–129 (AE), and arginine 147. Residues 219 to 238 (KETPNKYPRKPGTPNKLPIE) form a disordered region.

This sequence belongs to the methyltransferase superfamily. RNA methyltransferase RsmG family.

It is found in the cytoplasm. Functionally, specifically methylates the N7 position of guanine in position 535 of 16S rRNA. The polypeptide is Ribosomal RNA small subunit methyltransferase G (Listeria monocytogenes serovar 1/2a (strain ATCC BAA-679 / EGD-e)).